We begin with the raw amino-acid sequence, 192 residues long: ADP-ribose glycohydrolase AF_1521 (192 aa).

One can recognise a Macro domain in the interval 1-192 (MEVLFEAKVG…VALKVFERSL (192 aa)). Residues 19-21 (GDI), 32-34 (AAN), 39-44 (HGGGVA), and 140-146 (VSAGIYG) each bind substrate.

The enzyme catalyses 5-O-(ADP-D-ribosyl)-L-glutamyl-[protein] + H2O = L-glutamyl-[protein] + ADP-D-ribose + H(+). The catalysed reaction is 4-O-(ADP-D-ribosyl)-L-aspartyl-[protein] + H2O = L-aspartyl-[protein] + ADP-D-ribose + H(+). It carries out the reaction alpha-NAD(+) + H2O = ADP-D-ribose + nicotinamide + H(+). Removes ADP-ribose from aspartate and glutamate residues in proteins bearing a single ADP-ribose moiety. Inactive towards proteins bearing poly-ADP-ribose. Catalyzes removal of a phosphate group from ADP-ribose 1''-phosphate (Appr1p), but with low efficiency. This is ADP-ribose glycohydrolase AF_1521 from Archaeoglobus fulgidus (strain ATCC 49558 / DSM 4304 / JCM 9628 / NBRC 100126 / VC-16).